The sequence spans 316 residues: MCVDVPCENCIVRNDGLRLKCSECAEGSSKLFPRQNRQHSSAISHISNSSPPTRKRSIDGGYTSGTDSANTSEIVIKKRLTFSKKSHSTSEIETWNAHLQVDYHLETVTPSCSTVYQKITSETLIEIMQKLSQIEFMQKYILIDCRYDYEYNGGHIKGAQSLFNPETAADFFFNKDGSKKINRIPIFYCEYSQKRGPTMANNLREVDRKLNSNIYPRCDYEEIYLLEGGYKNFYAFTRGLEKEQRVQLCEPDNYVIMFDDRYKAELRKHQFHKKNVSKPMKKWSSTTSVISILTTSGTRISTLRQTCDPIHEHDAH.

The disordered stretch occupies residues 35 to 65; it reads QNRQHSSAISHISNSSPPTRKRSIDGGYTSG. Residues 39 to 50 show a composition bias toward low complexity; that stretch reads HSSAISHISNSS. In terms of domain architecture, Rhodanese spans 136-242; it reads FMQKYILIDC…FYAFTRGLEK (107 aa).

This sequence belongs to the MPI phosphatase family.

It carries out the reaction O-phospho-L-tyrosyl-[protein] + H2O = L-tyrosyl-[protein] + phosphate. The polypeptide is M-phase inducer phosphatase cdc-25.3 (cdc-25.3) (Caenorhabditis elegans).